The following is a 397-amino-acid chain: Digeranylgeranylglycerophospholipid reductase 1 (397 aa).

FAD-binding residues include alanine 18, aspartate 37, cysteine 48, alanine 49, glycine 51, arginine 104, alanine 128, aspartate 284, glycine 296, and isoleucine 297.

This sequence belongs to the geranylgeranyl reductase family. DGGGPL reductase subfamily. The cofactor is FAD.

The enzyme catalyses a 2,3-bis-O-phytanyl-sn-glycerol 1-phospholipid + 8 A = a 2,3-bis-O-(geranylgeranyl)-sn-glycerol 1-phospholipid + 8 AH2. The catalysed reaction is 2,3-bis-O-(phytanyl)-sn-glycerol 1-phosphate + 8 A = 2,3-bis-O-(geranylgeranyl)-sn-glycerol 1-phosphate + 8 AH2. It carries out the reaction CDP-2,3-bis-O-(geranylgeranyl)-sn-glycerol + 8 AH2 = CDP-2,3-bis-O-(phytanyl)-sn-glycerol + 8 A. It catalyses the reaction archaetidylserine + 8 AH2 = 2,3-bis-O-phytanyl-sn-glycero-3-phospho-L-serine + 8 A. The protein operates within membrane lipid metabolism; glycerophospholipid metabolism. Functionally, is involved in the reduction of 2,3-digeranylgeranylglycerophospholipids (unsaturated archaeols) into 2,3-diphytanylglycerophospholipids (saturated archaeols) in the biosynthesis of archaeal membrane lipids. Catalyzes the formation of archaetidic acid (2,3-di-O-phytanyl-sn-glyceryl phosphate) from 2,3-di-O-geranylgeranylglyceryl phosphate (DGGGP) via the hydrogenation of each double bond of the isoprenoid chains. Is also probably able to reduce double bonds of geranyl groups in CDP-2,3-bis-O-(geranylgeranyl)-sn-glycerol and archaetidylserine, thus acting at various stages in the biosynthesis of archaeal membrane lipids. This Methanothermobacter thermautotrophicus (strain ATCC 29096 / DSM 1053 / JCM 10044 / NBRC 100330 / Delta H) (Methanobacterium thermoautotrophicum) protein is Digeranylgeranylglycerophospholipid reductase 1.